The following is a 261-amino-acid chain: Cytochrome c oxidase subunit 3 (261 aa).

The Mitochondrial matrix segment spans residues 1–15; sequence MTHQTHAYHMVDPSP. Residues 16–34 form a helical membrane-spanning segment; sequence WPLTGALSALLMTSGLTMW. Residues 35-40 are Mitochondrial intermembrane-facing; sequence FHYHSV. The chain crosses the membrane as a helical span at residues 41–66; sequence TLLLLGLTTNILTMFQWWRDVVREGT. At 67–72 the chain is on the mitochondrial matrix side; that stretch reads FQGHHT. Residues 73–105 form a helical membrane-spanning segment; that stretch reads PVVQESLRYGMILFITSEVLFFTGFFWAFYHSS. Residues 106-128 lie on the Mitochondrial intermembrane side of the membrane; that stretch reads LAPTPELGSYWPPVGVYPLNPLE. The helical transmembrane segment at 129–152 threads the bilayer; that stretch reads VPLLNTSVLLASGVTITWAHHSLM. At 153–155 the chain is on the mitochondrial matrix side; the sequence is EGN. Residues 156–183 traverse the membrane as a helical segment; the sequence is RKNMLQALLITILLGVYFTLLQMFEYYE. The Mitochondrial intermembrane segment spans residues 184–190; the sequence is ASFTISD. The chain crosses the membrane as a helical span at residues 191–223; that stretch reads GIYGSTFFVTTGFHGLHVIIGSTFLLTCFIRQL. Residues 224-232 are Mitochondrial matrix-facing; that stretch reads KFHFTSNHH. Residues 233–256 form a helical membrane-spanning segment; the sequence is FGFEAAAWYWHFVDVVWLFLYLSI. The Mitochondrial intermembrane segment spans residues 257 to 261; sequence YWWGS.

This sequence belongs to the cytochrome c oxidase subunit 3 family. In terms of assembly, component of the cytochrome c oxidase (complex IV, CIV), a multisubunit enzyme composed of 14 subunits. The complex is composed of a catalytic core of 3 subunits MT-CO1, MT-CO2 and MT-CO3, encoded in the mitochondrial DNA, and 11 supernumerary subunits COX4I, COX5A, COX5B, COX6A, COX6B, COX6C, COX7A, COX7B, COX7C, COX8 and NDUFA4, which are encoded in the nuclear genome. The complex exists as a monomer or a dimer and forms supercomplexes (SCs) in the inner mitochondrial membrane with NADH-ubiquinone oxidoreductase (complex I, CI) and ubiquinol-cytochrome c oxidoreductase (cytochrome b-c1 complex, complex III, CIII), resulting in different assemblies (supercomplex SCI(1)III(2)IV(1) and megacomplex MCI(2)III(2)IV(2)).

The protein localises to the mitochondrion inner membrane. The catalysed reaction is 4 Fe(II)-[cytochrome c] + O2 + 8 H(+)(in) = 4 Fe(III)-[cytochrome c] + 2 H2O + 4 H(+)(out). Its function is as follows. Component of the cytochrome c oxidase, the last enzyme in the mitochondrial electron transport chain which drives oxidative phosphorylation. The respiratory chain contains 3 multisubunit complexes succinate dehydrogenase (complex II, CII), ubiquinol-cytochrome c oxidoreductase (cytochrome b-c1 complex, complex III, CIII) and cytochrome c oxidase (complex IV, CIV), that cooperate to transfer electrons derived from NADH and succinate to molecular oxygen, creating an electrochemical gradient over the inner membrane that drives transmembrane transport and the ATP synthase. Cytochrome c oxidase is the component of the respiratory chain that catalyzes the reduction of oxygen to water. Electrons originating from reduced cytochrome c in the intermembrane space (IMS) are transferred via the dinuclear copper A center (CU(A)) of subunit 2 and heme A of subunit 1 to the active site in subunit 1, a binuclear center (BNC) formed by heme A3 and copper B (CU(B)). The BNC reduces molecular oxygen to 2 water molecules using 4 electrons from cytochrome c in the IMS and 4 protons from the mitochondrial matrix. The protein is Cytochrome c oxidase subunit 3 (MT-CO3) of Loxodonta africana (African elephant).